A 350-amino-acid polypeptide reads, in one-letter code: tRNA N6-adenosine threonylcarbamoyltransferase (350 aa).

Fe cation is bound by residues His-115 and His-119. Substrate contacts are provided by residues 137–141 (IISGG), Asp-170, Gly-183, and Asn-281. Position 309 (Asp-309) interacts with Fe cation.

It belongs to the KAE1 / TsaD family. It depends on Fe(2+) as a cofactor.

It is found in the cytoplasm. It carries out the reaction L-threonylcarbamoyladenylate + adenosine(37) in tRNA = N(6)-L-threonylcarbamoyladenosine(37) in tRNA + AMP + H(+). In terms of biological role, required for the formation of a threonylcarbamoyl group on adenosine at position 37 (t(6)A37) in tRNAs that read codons beginning with adenine. Is involved in the transfer of the threonylcarbamoyl moiety of threonylcarbamoyl-AMP (TC-AMP) to the N6 group of A37, together with TsaE and TsaB. TsaD likely plays a direct catalytic role in this reaction. The protein is tRNA N6-adenosine threonylcarbamoyltransferase of Ehrlichia canis (strain Jake).